We begin with the raw amino-acid sequence, 1097 residues long: DNA-directed RNA polymerase subunit beta (1097 aa).

Residues 1072 to 1097 (QDINPRRNTPSRPTYESLGTSEYEED) are disordered. Polar residues predominate over residues 1077–1091 (RRNTPSRPTYESLGT).

Belongs to the RNA polymerase beta chain family. As to quaternary structure, in cyanobacteria the RNAP catalytic core is composed of 2 alpha, 1 beta, 1 beta', 1 gamma and 1 omega subunit. When a sigma factor is associated with the core the holoenzyme is formed, which can initiate transcription.

The enzyme catalyses RNA(n) + a ribonucleoside 5'-triphosphate = RNA(n+1) + diphosphate. In terms of biological role, DNA-dependent RNA polymerase catalyzes the transcription of DNA into RNA using the four ribonucleoside triphosphates as substrates. This chain is DNA-directed RNA polymerase subunit beta, found in Prochlorococcus marinus (strain MIT 9215).